The primary structure comprises 471 residues: Isochorismate synthase MenF (471 aa).

Lys226 functions as the Proton acceptor in the catalytic mechanism. The active-site Proton donor is Glu275. Mg(2+) is bound by residues Glu319 and Glu454.

Belongs to the isochorismate synthase family. Requires Mg(2+) as cofactor.

It carries out the reaction chorismate = isochorismate. The protein operates within quinol/quinone metabolism; 1,4-dihydroxy-2-naphthoate biosynthesis; 1,4-dihydroxy-2-naphthoate from chorismate: step 1/7. It participates in quinol/quinone metabolism; menaquinone biosynthesis. In terms of biological role, catalyzes the conversion of chorismate to isochorismate. The polypeptide is Isochorismate synthase MenF (Bacillus subtilis (strain 168)).